A 299-amino-acid chain; its full sequence is Probable lipid kinase YegS (299 aa).

In terms of domain architecture, DAGKc spans 2–133 (AEFPASLLIL…IDMAQVNKQT (132 aa)). Residues T40, 66–72 (GDGTINE), and T95 contribute to the ATP site. Mg(2+) is bound by residues L215, D218, and L220. The Proton acceptor role is filled by E271.

It belongs to the diacylglycerol/lipid kinase family. YegS lipid kinase subfamily. Requires Mg(2+) as cofactor. The cofactor is Ca(2+).

The protein localises to the cytoplasm. Functionally, probably phosphorylates lipids; the in vivo substrate is unknown. The protein is Probable lipid kinase YegS of Shigella boydii serotype 18 (strain CDC 3083-94 / BS512).